Reading from the N-terminus, the 531-residue chain is Muscarinic acetylcholine receptor M5 (531 aa).

Residues 1-28 (MEGESYNESTVNGTPVNHQALERHGLWE) lie on the Extracellular side of the membrane. Asparagine 7 is a glycosylation site (N-linked (GlcNAc...) asparagine). The helical transmembrane segment at 29-52 (VITIAVVTAVVSLMTIVGNVLVMI) threads the bilayer. Topologically, residues 53–65 (SFKVNSQLKTVNN) are cytoplasmic. A helical membrane pass occupies residues 66–86 (YYLLSLACADLIIGIFSMNLY). Over 87 to 103 (TTYILMGRWVLGSLACD) the chain is Extracellular. Cysteines 102 and 182 form a disulfide. A helical transmembrane segment spans residues 104-125 (LWLALDYVASNASVMNLLVISF). Over 126-145 (DRYFSITRPLTYRAKRTPKR) the chain is Cytoplasmic. A helical membrane pass occupies residues 146-168 (AGIMIGLAWLVSFILWAPAILCW). At 169–190 (QYLVGKRTVPPDECQIQFLSEP) the chain is on the extracellular side. The helical transmembrane segment at 191–213 (TITFGTAIAAFYIPVSVMTILYC) threads the bilayer. Over 214–442 (RIYRETEKRT…LVKERKAAQT (229 aa)) the chain is Cytoplasmic. Disordered regions lie at residues 259 to 295 (SLAQRERNQASWSSSRRSTSTTGKTTQATDLSADWEK) and 327 to 346 (EAKESPGKESNTQETKETVV). The segment covering 267 to 287 (QASWSSSRRSTSTTGKTTQAT) has biased composition (low complexity). A compositionally biased stretch (polar residues) spans 334-346 (KESNTQETKETVV). The helical transmembrane segment at 443–463 (LSAILLAFIITWTPYNIMVLV) threads the bilayer. Residues 464–477 (STFCDKCVPVTLWH) lie on the Extracellular side of the membrane. The chain crosses the membrane as a helical span at residues 478 to 497 (LGYWLCYVNSTINPICYALC). At 498–531 (NRTFRKTFKLLLLCRWKKKKVEEKLYWQGNSKLP) the chain is on the cytoplasmic side. Threonine 500 and threonine 504 each carry phosphothreonine.

This sequence belongs to the G-protein coupled receptor 1 family. Muscarinic acetylcholine receptor subfamily. CHRM5 sub-subfamily.

Its subcellular location is the cell membrane. It localises to the postsynaptic cell membrane. Functionally, the muscarinic acetylcholine receptor mediates various cellular responses, including inhibition of adenylate cyclase, breakdown of phosphoinositides and modulation of potassium channels through the action of G proteins. Primary transducing effect is Pi turnover. This chain is Muscarinic acetylcholine receptor M5 (Chrm5), found in Rattus norvegicus (Rat).